A 65-amino-acid chain; its full sequence is Large ribosomal subunit protein bL32 (65 aa).

The span at Met1–His19 shows a compositional bias: basic residues. The segment at Met1–Glu32 is disordered.

Belongs to the bacterial ribosomal protein bL32 family.

The protein is Large ribosomal subunit protein bL32 of Ruthia magnifica subsp. Calyptogena magnifica.